The chain runs to 126 residues: Integrin alpha-M (126 aa).

Asn25, Asn78, and Asn106 each carry an N-linked (GlcNAc...) asparagine glycan.

The protein belongs to the integrin alpha chain family. In terms of assembly, heterodimer of an alpha and a beta chain. ITGAM associates with ITGB2. Found in a complex with CD177 and ITGB2/CD18. Interacts with JAM3. Interacts with THBD. Interacts with TMEM268; this interaction inhibits ITGAM degradation via the endosome-lysosome pathway.

The protein localises to the cell membrane. Its subcellular location is the membrane raft. Its function is as follows. Integrin ITGAM/ITGB2 is implicated in various adhesive interactions of monocytes, macrophages and granulocytes as well as in mediating the uptake of complement-coated particles. It is identical with CR-3, the receptor for the iC3b fragment of the third complement component. It probably recognizes the R-G-D peptide in C3b. Integrin ITGAM/ITGB2 is also a receptor for fibrinogen, factor X and ICAM1. It recognizes P1 and P2 peptides of fibrinogen gamma chain. Regulates neutrophil migration. In association with beta subunit ITGB2/CD18, required for CD177-PRTN3-mediated activation of TNF primed neutrophils. May regulate phagocytosis-induced apoptosis in extravasated neutrophils. May play a role in mast cell development. Required with TYROBP/DAP12 in microglia to control production of microglial superoxide ions which promote the neuronal apoptosis that occurs during brain development. This Cavia porcellus (Guinea pig) protein is Integrin alpha-M (ITGAM).